Reading from the N-terminus, the 139-residue chain is Protocatechuate 4,5-dioxygenase alpha chain (139 aa).

Composed of two subunits (alpha and beta) in a 1:1 ratio. Fe(2+) serves as cofactor.

It catalyses the reaction 3,4-dihydroxybenzoate + O2 = 4-carboxy-2-hydroxy-cis,cis-muconate 6-semialdehyde + H(+). Functionally, responsible for the aromatic ring fission of protocatechuate. This Sphingobium sp. (strain NBRC 103272 / SYK-6) protein is Protocatechuate 4,5-dioxygenase alpha chain (ligA).